The sequence spans 149 residues: Decarboxylase AgnL1 (149 aa).

Positions 30–125 (PGMSEEDYRH…VGDHEKFADT (96 aa)) constitute an EthD domain.

This sequence belongs to the tpcK family.

It catalyses the reaction atrochrysone carboxylate + H(+) = atrochrysone + CO2. The protein operates within secondary metabolite biosynthesis. Decarboxylase; part of the gene cluster that mediates the biosynthesis of agnestins, dihydroxy-xanthone metabolites. The pathway begins with the assembly and cyclization of atrochrysone thioester by the non-reducing polyketide synthase Agnpks1. The atrochrysone carboxyl ACP thioesterase AgnL7 then breaks the thioester bond and releases the atrochrysone carboxylic acid as the first enzyme-free intermediate. The decarboxylase AgnL1 then catalyzes the concerted decarboxylation-elimination required to convert atochrysone carboxylic acid into emodin anthrone, which is further oxidized to emodin by the anthrone oxygenase AgnL2. Emodin then undergoes reduction catalyzed by the oxidoreductase AgnL4 to yield the dihydroquinone tautomer which is the substrate for reduction by the short chain dehydrogenase AgnL6 reduction to produce hydroxyketone, followed by AgnL8 dehydration and likely spontaneous autoxidation to chrysophanol. Baeyer-Villiger oxidation by the oxidase AgnL3 leads to monodictyphenone via cleavage of the C-10/C-10a bond of chrysophanol. Alternative cleavage at the C-4a/C-10 bond of chrysophanol also leads to the formation some cephalone F. Further conversion to agnestins A and B, requires reduction to dihydro-monodictyphenone, oxidation to agnestin C probably via an epoxide, and rearrangement to either agnestin A or agnestin B directly, although agnestin A or agnestin B can also interconvert. Within the cluster, AgnR1 is the only unassigned oxidoreductase present which could be involved in this conversion. However, AgnR1 seems not to be involved in this step, and thus genes involved in the proposed oxidation/reduction may be located elsewhere on the genome. Further agnestin A derivatives are probably formed by spontaneous decarboxylations, dehydrations and methanolysis reactions. The sequence is that of Decarboxylase AgnL1 from Paecilomyces divaricatus (Penicillium divaricatum).